A 918-amino-acid chain; its full sequence is GPI ethanolamine phosphate transferase 3 (918 aa).

Residues 16–36 (IGTWKYIQACIFFAIILISNF) traverse the membrane as a helical segment. Residues Asn-54, Asn-71, Asn-101, Asn-197, and Asn-399 are each glycosylated (N-linked (GlcNAc...) asparagine). 15 helical membrane passes run 429–449 (LFPM…LALL), 459–479 (MSAN…ILIL), 486–506 (SPFP…LNSF), 523–543 (FSIF…FTVW), 547–563 (LCHF…FCKC), 567–587 (MSPL…LQVI), 616–636 (TLIV…ILQL), 651–671 (LSIL…HHVF), 687–707 (SLAN…FFLL), 715–735 (INVI…LSFL), 738–758 (PLGH…IQLK), 762–782 (PSVG…SHFF), 813–833 (IFMF…IPLF), 853–873 (FSFI…AGFF), and 887–907 (FMLS…QCFG).

The protein belongs to the PIGG/PIGN/PIGO family. PIGO subfamily. In terms of processing, glycosylated.

Its subcellular location is the endoplasmic reticulum membrane. Its pathway is glycolipid biosynthesis; glycosylphosphatidylinositol-anchor biosynthesis. Its function is as follows. Involved in glycosylphosphatidylinositol-anchor biosynthesis. Transfers ethanolamine phosphate to the GPI third mannose which links the GPI-anchor to the C-terminus of the proteins by an amide bond. Involved in cell wall biosynthesis. The sequence is that of GPI ethanolamine phosphate transferase 3 (gpi13) from Schizosaccharomyces pombe (strain 972 / ATCC 24843) (Fission yeast).